The chain runs to 513 residues: ATP synthase subunit alpha (513 aa).

169–176 (GDRQTGKT) serves as a coordination point for ATP.

It belongs to the ATPase alpha/beta chains family. F-type ATPases have 2 components, CF(1) - the catalytic core - and CF(0) - the membrane proton channel. CF(1) has five subunits: alpha(3), beta(3), gamma(1), delta(1), epsilon(1). CF(0) has three main subunits: a(1), b(2) and c(9-12). The alpha and beta chains form an alternating ring which encloses part of the gamma chain. CF(1) is attached to CF(0) by a central stalk formed by the gamma and epsilon chains, while a peripheral stalk is formed by the delta and b chains.

It localises to the cell inner membrane. It carries out the reaction ATP + H2O + 4 H(+)(in) = ADP + phosphate + 5 H(+)(out). In terms of biological role, produces ATP from ADP in the presence of a proton gradient across the membrane. The alpha chain is a regulatory subunit. The protein is ATP synthase subunit alpha of Shewanella sp. (strain MR-4).